A 1091-amino-acid polypeptide reads, in one-letter code: Voltage-dependent calcium channel subunit alpha-2/delta-1 (1091 aa).

The first 24 residues, 1–24 (MAAGCLLALTLTLFQSWLIGPSSE), serve as a signal peptide directing secretion. The Extracellular portion of the chain corresponds to 25–1061 (EPFPSPVTIK…VLEDYTDCGG (1037 aa)). Asn-92 carries an N-linked (GlcNAc...) asparagine glycan. Ser-119 is modified (phosphoserine). 2 N-linked (GlcNAc...) asparagine glycosylation sites follow: Asn-136 and Asn-184. The VWFA domain maps to 252–429 (DMLILVDVSG…INTQEYLDVL (178 aa)). Residues Asp-258, Ser-260, and Ser-262 each coordinate a divalent metal cation. The short motif at 258 to 262 (DVSGS) is the MIDAS-like motif element. Asn-323 and Asn-347 each carry an N-linked (GlcNAc...) asparagine glycan. Cys-403 and Cys-1047 are oxidised to a cystine. A Cache domain is found at 445-536 (WTNVYLDALE…QPKNPKSQEP (92 aa)). 4 N-linked (GlcNAc...) asparagine glycosylation sites follow: Asn-593, Asn-769, Asn-876, and Asn-973. The helical transmembrane segment at 1062-1082 (VSGLNPSLWSIFGLQFILLWL) threads the bilayer. At 1083-1091 (VSGSRHYLW) the chain is on the cytoplasmic side.

Belongs to the calcium channel subunit alpha-2/delta family. In terms of assembly, dimer formed of alpha-2-1 and delta-1 chains; disulfide-linked. Voltage-dependent calcium channels are multisubunit complexes, consisting of alpha-1 (CACNA1), alpha-2 (CACNA2D), beta (CACNB) and delta (CACNA2D) subunits in a 1:1:1:1 ratio. Post-translationally, proteolytically processed into subunits alpha-2-1 and delta-1 that are disulfide-linked.

It localises to the membrane. Its subcellular location is the cell membrane. The alpha-2/delta subunit of voltage-dependent calcium channels regulates calcium current density and activation/inactivation kinetics of the calcium channel. Plays an important role in excitation-contraction coupling. This Rattus norvegicus (Rat) protein is Voltage-dependent calcium channel subunit alpha-2/delta-1 (Cacna2d1).